Reading from the N-terminus, the 441-residue chain is MSKSIVAVVGRPNVGKSTLFNALAGDRISIVKDTPGVTRDRIYADITWLDKQFTLVDTGGIEPESKDMMLTYMREQAEIAIATADVIMFVVDVRQGLLDADNKVADMLRRSGKPVILVVNKVDNFDKFMPDVYEFYNLGIGDPVPVSAASMLGFGDLLDLVVGHFPPEALEEEEDERPRIAIVGKPNVGKSSIINKLLGENRVIVSDVAGTTRDAIDTAVTWNKKDYVFIDTAGLRRKSKIKEELERFSIIRTVSAVERADVVVVVIDANEGVTEQDAKIAGIAHERGKGIIIAVNKWDAIEKDDKTIYKYTNRIREILSFLPYAEIMFLSAKTGQRVTKLFDSIEVVIQNRNLRISTGVLNEIMMEATALQQPPSDKGKRLRLYYITQVAVKPPTFVIFVNDKELMHYSYTRYIENKIREAFGFSGTSLKFFIRERKEND.

EngA-type G domains are found at residues Ser4–Ala169 and Pro178–Asn353. GTP contacts are provided by residues Gly10–Ser17, Asp57–Ile61, Asn120–Asp123, Gly184–Ser191, Asp231–Leu235, and Asn296–Asp299. The KH-like domain maps to Leu354–Lys438.

Belongs to the TRAFAC class TrmE-Era-EngA-EngB-Septin-like GTPase superfamily. EngA (Der) GTPase family. In terms of assembly, associates with the 50S ribosomal subunit.

In terms of biological role, GTPase that plays an essential role in the late steps of ribosome biogenesis. This Lachnoclostridium phytofermentans (strain ATCC 700394 / DSM 18823 / ISDg) (Clostridium phytofermentans) protein is GTPase Der.